A 209-amino-acid polypeptide reads, in one-letter code: Protein GrpE (209 aa).

The disordered stretch occupies residues 1-63; sequence MKKSRKKENM…NPEEACREEN (63 aa). 2 stretches are compositionally biased toward basic and acidic residues: residues 7 to 42 and 50 to 63; these read KENMDSKERNQKEAERSEARNSESPAEKAGETKVSP and EAEKNPEEACREEN.

The protein belongs to the GrpE family. As to quaternary structure, homodimer.

Its subcellular location is the cytoplasm. In terms of biological role, participates actively in the response to hyperosmotic and heat shock by preventing the aggregation of stress-denatured proteins, in association with DnaK and GrpE. It is the nucleotide exchange factor for DnaK and may function as a thermosensor. Unfolded proteins bind initially to DnaJ; upon interaction with the DnaJ-bound protein, DnaK hydrolyzes its bound ATP, resulting in the formation of a stable complex. GrpE releases ADP from DnaK; ATP binding to DnaK triggers the release of the substrate protein, thus completing the reaction cycle. Several rounds of ATP-dependent interactions between DnaJ, DnaK and GrpE are required for fully efficient folding. The sequence is that of Protein GrpE from Methanosarcina mazei (strain ATCC BAA-159 / DSM 3647 / Goe1 / Go1 / JCM 11833 / OCM 88) (Methanosarcina frisia).